Reading from the N-terminus, the 371-residue chain is MGVISFYLIGQLLYLIRKKYTTTYRQQQQHQYNMDSKHSTSSSSSGSLATRISNSGPISIAAYCLSSILMTVTNKYVLSGFSFNLNFFLLAVQSIVCIVTIGSLKSLNIITYRQFNKDEAKKWSPIAFLLVAMIYTSSKALQYLSIPVYTIFKNLTIILIAYGEVIWFGGKVTTMALSSFLLMVLSSVIAYYGDNAAVKSHDDAFALYLGYFWMLTNCFASAAFVLIMRKRIKLTNFKDFDTMYYNNLLSIPILLICSFIFEDWSSANVSLNFPADNRVTTITAMILSGASSVGISYCSAWCVRVTSSTTYSMVGALNKLPIALSGLIFFEAAVNFWSVSSIFVGFGAGLVYAVAKQKQQKEQSQQLPTTK.

Topologically, residues 1–51 (MGVISFYLIGQLLYLIRKKYTTTYRQQQQHQYNMDSKHSTSSSSSGSLATR) are cytoplasmic. The helical transmembrane segment at 52-72 (ISNSGPISIAAYCLSSILMTV) threads the bilayer. Residues 73 to 80 (TNKYVLSG) lie on the Lumenal side of the membrane. Residues 81–101 (FSFNLNFFLLAVQSIVCIVTI) form a helical membrane-spanning segment. At 102–121 (GSLKSLNIITYRQFNKDEAK) the chain is on the cytoplasmic side. Residues 122–138 (KWSPIAFLLVAMIYTSS) traverse the membrane as a helical segment. Over 139 to 145 (KALQYLS) the chain is Lumenal. Residues 146–162 (IPVYTIFKNLTIILIAY) traverse the membrane as a helical segment. Over 163–171 (GEVIWFGGK) the chain is Cytoplasmic. Residues 172-192 (VTTMALSSFLLMVLSSVIAYY) traverse the membrane as a helical segment. Residues 193 to 206 (GDNAAVKSHDDAFA) lie on the Lumenal side of the membrane. Residues 207-227 (LYLGYFWMLTNCFASAAFVLI) form a helical membrane-spanning segment. Topologically, residues 228-241 (MRKRIKLTNFKDFD) are cytoplasmic. Residues 242–262 (TMYYNNLLSIPILLICSFIFE) traverse the membrane as a helical segment. Over 263–281 (DWSSANVSLNFPADNRVTT) the chain is Lumenal. A glycan (N-linked (GlcNAc...) asparagine) is linked at asparagine 268. The helical transmembrane segment at 282–302 (ITAMILSGASSVGISYCSAWC) threads the bilayer. The Cytoplasmic portion of the chain corresponds to 303–309 (VRVTSST). The helical transmembrane segment at 310–329 (TYSMVGALNKLPIALSGLIF) threads the bilayer. Residues 330–332 (FEA) lie on the Lumenal side of the membrane. Residues 333-355 (AVNFWSVSSIFVGFGAGLVYAVA) traverse the membrane as a helical segment. The Cytoplasmic portion of the chain corresponds to 356 to 371 (KQKQQKEQSQQLPTTK).

It belongs to the TPT transporter family. SLC35D subfamily. As to quaternary structure, homooligomer.

It localises to the golgi apparatus membrane. The protein localises to the cytoplasmic vesicle membrane. The protein resides in the endoplasmic reticulum membrane. Functionally, involved in the import of GDP-mannose from the cytoplasm into the Golgi lumen. Involved in hyphal formation. This is GDP-mannose transporter (VRG4) from Candida albicans (strain SC5314 / ATCC MYA-2876) (Yeast).